A 377-amino-acid chain; its full sequence is O-phospho-L-seryl-tRNA:Cys-tRNA synthase (377 aa).

Residues 82 to 83, asparagine 189, and 212 to 214 contribute to the pyridoxal 5'-phosphate site; these read AR and SGH. N6-(pyridoxal phosphate)lysine is present on lysine 215.

Belongs to the SepCysS family. Homodimer. Interacts with SepRS. Pyridoxal 5'-phosphate serves as cofactor.

The enzyme catalyses O-phospho-L-seryl-tRNA(Cys) + hydrogen sulfide + H(+) = L-cysteinyl-tRNA(Cys) + phosphate. Its function is as follows. Converts O-phospho-L-seryl-tRNA(Cys) (Sep-tRNA(Cys)) to L-cysteinyl-tRNA(Cys) (Cys-tRNA(Cys)). The chain is O-phospho-L-seryl-tRNA:Cys-tRNA synthase from Methanocaldococcus jannaschii (strain ATCC 43067 / DSM 2661 / JAL-1 / JCM 10045 / NBRC 100440) (Methanococcus jannaschii).